A 445-amino-acid chain; its full sequence is Homogentisate 1,2-dioxygenase (445 aa).

Lys98 carries the N6-acetyllysine modification. Positions 335, 341, and 371 each coordinate Fe cation. N6-succinyllysine is present on Lys414.

This sequence belongs to the homogentisate dioxygenase family. As to quaternary structure, homohexamer arranged as a dimer of trimers. Requires Fe cation as cofactor. As to expression, highest expression in the prostate, small intestine, colon, kidney and liver.

The enzyme catalyses homogentisate + O2 = 4-maleylacetoacetate + H(+). Its pathway is amino-acid degradation; L-phenylalanine degradation; acetoacetate and fumarate from L-phenylalanine: step 4/6. In terms of biological role, catalyzes the conversion of homogentisate to maleylacetoacetate. The protein is Homogentisate 1,2-dioxygenase (HGD) of Homo sapiens (Human).